Here is a 401-residue protein sequence, read N- to C-terminus: MLLSASIMLYHLDMFDTQLITENFVMGTNNFPLMAIPFFMLTGEIMKHGGISERIINFATSMVGHIKGGLGYVAIISGLIFAGLSGSAVADTAALGAILIPMMISKKYDGARSTGLICAAGIISVVIPPSIPMIIYGITAGASITKLFMGGTVPGLLMVVGLWVTWKILYRNNDTSLERKQTGKERWVAFKKAFWPLLLPIIIIVGLRGGIFTPTEAGVVAAIYAGIVSIAYKGLTFSKLKDVFIGTIKTTSMVMFVAASAMISAFAITVAQIPTELVQTIKGLTDSPTILMFIIMLFLLLVGCVMDLIPAVLIFVPVLLPVLRAYNIDIAYFGIMMVINLSIGLITPPVGTVLYVGSGISKLGIGALSKGIAPFLFVYAIIMMLIVFFPEIVIVPMNWLS.

A run of 11 helical transmembrane segments spans residues 31–51, 70–90, 115–135, 144–164, 193–213, 217–237, 253–273, 290–310, 330–350, 353–373, and 375–395; these read FPLM…HGGI, LGYV…SAVA, GLIC…PMII, ITKL…GLWV, AFWP…GIFT, AGVV…GLTF, MVMF…VAQI, ILMF…DLIP, IAYF…TPPV, VLYV…KGIA, and FLFV…IVIV.

This sequence belongs to the TRAP transporter large permease family.

It localises to the cell inner membrane. The chain is Putative TRAP transporter large permease protein HI_0050 from Haemophilus influenzae (strain ATCC 51907 / DSM 11121 / KW20 / Rd).